The sequence spans 557 residues: Carbamoyl phosphate synthase large chain, N-terminal section (557 aa).

Residues 1–402 (MPKRTDIKKI…ALLKAVRSLE (402 aa)) are carboxyphosphate synthetic domain. ATP is bound by residues R129, R169, G175, G176, K208, L210, E215, G241, V242, H243, Q285, and E299. In terms of domain architecture, ATP-grasp spans 133-328 (KETMESIGLK…IAKVAAKLAV (196 aa)). Residues Q285, E299, and N301 each contribute to the Mg(2+) site. Mn(2+) is bound by residues Q285, E299, and N301. Residues 403–553 (LDRYGLAFPK…PYYTVDGQEI (151 aa)) are oligomerization domain.

The protein belongs to the CarB family. As to quaternary structure, composed of two chains; the small (or glutamine) chain promotes the hydrolysis of glutamine to ammonia, which is used by the large (or ammonia) chain to synthesize carbamoyl phosphate. Tetramer of heterodimers (alpha,beta)4. Mg(2+) serves as cofactor. It depends on Mn(2+) as a cofactor.

The catalysed reaction is hydrogencarbonate + L-glutamine + 2 ATP + H2O = carbamoyl phosphate + L-glutamate + 2 ADP + phosphate + 2 H(+). The enzyme catalyses hydrogencarbonate + NH4(+) + 2 ATP = carbamoyl phosphate + 2 ADP + phosphate + 2 H(+). It participates in amino-acid biosynthesis; L-arginine biosynthesis; carbamoyl phosphate from bicarbonate: step 1/1. The protein operates within pyrimidine metabolism; UMP biosynthesis via de novo pathway; (S)-dihydroorotate from bicarbonate: step 1/3. Its function is as follows. Large subunit of the glutamine-dependent carbamoyl phosphate synthetase (CPSase). CPSase catalyzes the formation of carbamoyl phosphate from the ammonia moiety of glutamine, carbonate, and phosphate donated by ATP, constituting the first step of 2 biosynthetic pathways, one leading to arginine and/or urea and the other to pyrimidine nucleotides. The large subunit (synthetase) binds the substrates ammonia (free or transferred from glutamine from the small subunit), hydrogencarbonate and ATP and carries out an ATP-coupled ligase reaction, activating hydrogencarbonate by forming carboxy phosphate which reacts with ammonia to form carbamoyl phosphate. This is Carbamoyl phosphate synthase large chain, N-terminal section (carB1) from Aquifex aeolicus (strain VF5).